The following is a 208-amino-acid chain: Microtubule-associated protein Jupiter (208 aa).

2 disordered regions span residues 24–43 (RPPG…QTPR) and 82–106 (RGQK…PGKN). At Ser30 the chain carries Phosphoserine. Thr41 bears the Phosphothreonine mark. Over residues 82–93 (RGQKTVDSHSRL) the composition is skewed to basic and acidic residues. 2 positions are modified to phosphothreonine: Thr98 and Thr102. 3 positions are modified to phosphoserine: Ser111, Ser139, and Ser150. The tract at residues 132–208 (HYNGKSGSVS…PPGGYSSGLW (77 aa)) is disordered. A compositionally biased stretch (low complexity) spans 137–150 (SGSVSSASSSVSSS). 2 stretches are compositionally biased toward polar residues: residues 151-165 (TENL…SEGN) and 178-189 (EYSQRQESSNGG).

It belongs to the MAP Jupiter family. In terms of tissue distribution, ubiquitous expression throughout development. Expressed during cell division in the syncytial embryo. Expressed in developing photoreceptors of the eye imaginal disk of the third larval stage. In adults, highly expressed in neurons of the brain, concentrated in axons. In the adult ovaries, expression accumulates in the germarium and the polar follicular cells as well as in the oocyte along the microtubule network.

The protein resides in the nucleus. It localises to the cytoplasm. Its subcellular location is the cytoskeleton. It is found in the spindle. In terms of biological role, binds to all microtubule populations. The sequence is that of Microtubule-associated protein Jupiter from Drosophila melanogaster (Fruit fly).